A 335-amino-acid chain; its full sequence is Phosphate acyltransferase (335 aa).

The protein belongs to the PlsX family. Homodimer. Probably interacts with PlsY.

The protein localises to the cytoplasm. It carries out the reaction a fatty acyl-[ACP] + phosphate = an acyl phosphate + holo-[ACP]. It functions in the pathway lipid metabolism; phospholipid metabolism. Catalyzes the reversible formation of acyl-phosphate (acyl-PO(4)) from acyl-[acyl-carrier-protein] (acyl-ACP). This enzyme utilizes acyl-ACP as fatty acyl donor, but not acyl-CoA. In Streptococcus pyogenes serotype M1, this protein is Phosphate acyltransferase.